Consider the following 158-residue polypeptide: NADH-quinone oxidoreductase subunit B (158 aa).

The [4Fe-4S] cluster site is built by Cys37, Cys38, Cys102, and Cys132.

This sequence belongs to the complex I 20 kDa subunit family. As to quaternary structure, NDH-1 is composed of 14 different subunits. Subunits NuoB, C, D, E, F, and G constitute the peripheral sector of the complex. [4Fe-4S] cluster serves as cofactor.

It is found in the cell inner membrane. It carries out the reaction a quinone + NADH + 5 H(+)(in) = a quinol + NAD(+) + 4 H(+)(out). Its function is as follows. NDH-1 shuttles electrons from NADH, via FMN and iron-sulfur (Fe-S) centers, to quinones in the respiratory chain. The immediate electron acceptor for the enzyme in this species is believed to be ubiquinone. Couples the redox reaction to proton translocation (for every two electrons transferred, four hydrogen ions are translocated across the cytoplasmic membrane), and thus conserves the redox energy in a proton gradient. The sequence is that of NADH-quinone oxidoreductase subunit B from Acidithiobacillus ferrooxidans (strain ATCC 23270 / DSM 14882 / CIP 104768 / NCIMB 8455) (Ferrobacillus ferrooxidans (strain ATCC 23270)).